Reading from the N-terminus, the 199-residue chain is 5'-deoxynucleotidase Ent638_2835 (199 aa).

Substrate is bound by residues 18–19 (RW) and His33. Positions 30-142 (VSEHSLQVAM…VKQADALCAY (113 aa)) constitute an HD domain. His33, His68, and Asp69 together coordinate a divalent metal cation. Substrate is bound by residues Asp69, 77 to 80 (DLPT), and Asp137. A divalent metal cation is bound at residue Asp137.

Belongs to the 5DNU family. Homodimer. The cofactor is a divalent metal cation.

It localises to the cytoplasm. The catalysed reaction is a 2'-deoxyribonucleoside 5'-phosphate + H2O = a 2'-deoxyribonucleoside + phosphate. Its function is as follows. Catalyzes the strictly specific dephosphorylation of 2'-deoxyribonucleoside 5'-monophosphates. In Enterobacter sp. (strain 638), this protein is 5'-deoxynucleotidase Ent638_2835.